A 376-amino-acid chain; its full sequence is N-acetyldiaminopimelate deacetylase (376 aa).

Aspartate 69 is a catalytic residue. Catalysis depends on glutamate 128, which acts as the Proton acceptor.

This sequence belongs to the peptidase M20A family. N-acetyldiaminopimelate deacetylase subfamily.

The enzyme catalyses N-acetyl-(2S,6S)-2,6-diaminopimelate + H2O = (2S,6S)-2,6-diaminopimelate + acetate. It participates in amino-acid biosynthesis; L-lysine biosynthesis via DAP pathway; LL-2,6-diaminopimelate from (S)-tetrahydrodipicolinate (acetylase route): step 3/3. Catalyzes the conversion of N-acetyl-diaminopimelate to diaminopimelate and acetate. The chain is N-acetyldiaminopimelate deacetylase from Bacillus thuringiensis subsp. konkukian (strain 97-27).